Reading from the N-terminus, the 157-residue chain is 2-C-methyl-D-erythritol 2,4-cyclodiphosphate synthase (157 aa).

A divalent metal cation-binding residues include Asp-8 and His-10. 4-CDP-2-C-methyl-D-erythritol 2-phosphate-binding positions include 8–10 and 34–35; these read DVH and HS. His-42 contacts a divalent metal cation. 4-CDP-2-C-methyl-D-erythritol 2-phosphate is bound by residues 56 to 58, 61 to 65, 100 to 106, 132 to 135, Phe-139, and Arg-142; these read DIG, FPDTD, AQAPKML, and TTTE.

The protein belongs to the IspF family. Homotrimer. Requires a divalent metal cation as cofactor.

It catalyses the reaction 4-CDP-2-C-methyl-D-erythritol 2-phosphate = 2-C-methyl-D-erythritol 2,4-cyclic diphosphate + CMP. The protein operates within isoprenoid biosynthesis; isopentenyl diphosphate biosynthesis via DXP pathway; isopentenyl diphosphate from 1-deoxy-D-xylulose 5-phosphate: step 4/6. In terms of biological role, involved in the biosynthesis of isopentenyl diphosphate (IPP) and dimethylallyl diphosphate (DMAPP), two major building blocks of isoprenoid compounds. Catalyzes the conversion of 4-diphosphocytidyl-2-C-methyl-D-erythritol 2-phosphate (CDP-ME2P) to 2-C-methyl-D-erythritol 2,4-cyclodiphosphate (ME-CPP) with a corresponding release of cytidine 5-monophosphate (CMP). This chain is 2-C-methyl-D-erythritol 2,4-cyclodiphosphate synthase, found in Photorhabdus laumondii subsp. laumondii (strain DSM 15139 / CIP 105565 / TT01) (Photorhabdus luminescens subsp. laumondii).